We begin with the raw amino-acid sequence, 414 residues long: TnpB-like protein MJ1635 (414 aa).

Zn(2+) contacts are provided by C329, C332, C346, and C349.

In the N-terminal section; belongs to the transposase 2 family. This sequence in the C-terminal section; belongs to the transposase 35 family.

This Methanocaldococcus jannaschii (strain ATCC 43067 / DSM 2661 / JAL-1 / JCM 10045 / NBRC 100440) (Methanococcus jannaschii) protein is TnpB-like protein MJ1635.